A 66-amino-acid chain; its full sequence is Defensin-B1 (66 aa).

A signal peptide spans 1-23 (MNAHVLLLCTILFLLVHTPPVLG). 3 disulfides stabilise this stretch: C29–C56, C36–C50, and C40–C57. Residues 61–66 (VLMEDG) constitute a propeptide that is removed on maturation.

Belongs to the beta-defensin family. Expressed at low levels in kidney, lung, and spleen.

The protein localises to the secreted. Has bactericidal activity. May act as a ligand for C-C chemokine receptor CCR6. Positively regulates the sperm motility and bactericidal activity in a CCR6-dependent manner. Binds to CCR6 and triggers Ca2+ mobilization in the sperm which is important for its motility. The polypeptide is Defensin-B1 (Ornithorhynchus anatinus (Duckbill platypus)).